A 130-amino-acid chain; its full sequence is Small ribosomal subunit protein uS8 (130 aa).

The protein belongs to the universal ribosomal protein uS8 family. In terms of assembly, part of the 30S ribosomal subunit. Contacts proteins S5 and S12.

Functionally, one of the primary rRNA binding proteins, it binds directly to 16S rRNA central domain where it helps coordinate assembly of the platform of the 30S subunit. In Coxiella burnetii (strain RSA 331 / Henzerling II), this protein is Small ribosomal subunit protein uS8.